The primary structure comprises 32 residues: Delta-conotoxin EVIA (32 aa).

3 disulfides stabilise this stretch: C3–C21, C10–C25, and C20–C29. P6 bears the 4-hydroxyproline mark. Residue L32 is modified to Leucine amide.

This sequence belongs to the conotoxin O1 superfamily. Expressed by the venom duct.

It localises to the secreted. Delta-conotoxins bind to site 6 of voltage-gated sodium channels and inhibit the inactivation process. This toxin inhibits sodium channel inactivation in neuronal membranes from amphibians and mammals (Nav1.2a/SCN1A, Nav1.3/SCN3A and Nav1.6/SCN8A) upon binding to receptor site 6. This chain is Delta-conotoxin EVIA, found in Conus ermineus (Agate cone).